Here is a 571-residue protein sequence, read N- to C-terminus: Membrane protein insertase YidC (571 aa).

A helical transmembrane segment spans residues 4-24 (TRVFLIFAWLMVAVLLWMEWS). The interval 29–76 (APTPAPTTTSAPAAAQSVPGATPGSVPNAQVPGAPGQAAVQAQASATP) is disordered. Low complexity-rich tracts occupy residues 34–43 (PTTTSAPAAA) and 57–76 (AQVPGAPGQAAVQAQASATP). Transmembrane regions (helical) follow at residues 369–389 (LVGNWGWAIVGLVVLLKLVLY), 440–460 (GGCLPILIQMPIFFALYWVLV), 483–503 (YFILPVINVAVMWFTQKLTPA), and 518–538 (PLVFGVMMAFMPSGLVLYWVV).

This sequence belongs to the OXA1/ALB3/YidC family. Type 1 subfamily. Interacts with the Sec translocase complex via SecD. Specifically interacts with transmembrane segments of nascent integral membrane proteins during membrane integration.

The protein localises to the cell inner membrane. Its function is as follows. Required for the insertion and/or proper folding and/or complex formation of integral membrane proteins into the membrane. Involved in integration of membrane proteins that insert both dependently and independently of the Sec translocase complex, as well as at least some lipoproteins. Aids folding of multispanning membrane proteins. In Stenotrophomonas maltophilia (strain R551-3), this protein is Membrane protein insertase YidC.